Reading from the N-terminus, the 104-residue chain is Small ribosomal subunit protein bS6c (104 aa).

The protein belongs to the bacterial ribosomal protein bS6 family.

The protein localises to the plastid. Its subcellular location is the cyanelle. Functionally, binds together with bS18 to 16S ribosomal RNA. This Cyanophora paradoxa protein is Small ribosomal subunit protein bS6c (rps6).